We begin with the raw amino-acid sequence, 722 residues long: Disintegrin and metalloproteinase domain-containing protein 21 (722 aa).

The N-terminal stretch at 1-31 (MAVDGTLVYIRVTLLLLWLGVFLSISGYCQA) is a signal peptide. The propeptide occupies 32-196 (GPSQHFTSPE…FEEAENSALE (165 aa)). Asparagine 164 carries an N-linked (GlcNAc...) asparagine glycan. Positions 171 to 178 (MRCGLTEK) match the Cysteine switch motif. A Zn(2+)-binding site is contributed by cysteine 173. The Extracellular segment spans residues 197 to 681 (PKSAGDWWTH…DSGPASAKRG (485 aa)). Residues 208 to 398 (WFLELVVVVN…NQGSCLHNPP (191 aa)) enclose the Peptidase M12B domain. Asparagine 227 is a glycosylation site (N-linked (GlcNAc...) asparagine). 3 disulfide bridges follow: cysteine 316–cysteine 393, cysteine 356–cysteine 378, and cysteine 358–cysteine 363. Histidine 341 is a binding site for Zn(2+). The active site involves glutamate 342. Zn(2+) is bound by residues histidine 345 and histidine 351. N-linked (GlcNAc...) asparagine glycosylation is found at asparagine 377, asparagine 437, asparagine 478, asparagine 546, and asparagine 600. Residues 406 to 492 (LKRCGNGVVE…QCPEDRYVQD (87 aa)) enclose the Disintegrin domain. A disulfide bond links cysteine 464 and cysteine 484. Disulfide bonds link cysteine 634–cysteine 645, cysteine 639–cysteine 651, and cysteine 653–cysteine 662. One can recognise an EGF-like domain in the interval 634-663 (CLPETCNMKGICNNKHHCHCGYGWSPPYCQ). Residues 682 to 702 (VFLPLIVIPSLSVLTFLFTVG) traverse the membrane as a helical segment. Residues 703 to 722 (LLMYLRQCSGPKETKAHSSG) are Cytoplasmic-facing.

Zn(2+) serves as cofactor. Post-translationally, has no obvious cleavage site for furin endopeptidase, suggesting that the proteolytic processing is regulated.

It localises to the membrane. May be involved in sperm maturation and/or fertilization. May also be involved in epithelia functions associated with establishing and maintaining gradients of ions or nutrients. This is Disintegrin and metalloproteinase domain-containing protein 21 (ADAM21) from Homo sapiens (Human).